The following is a 266-amino-acid chain: MTCIFIKNINEINKMRLVGKLVADVLDMIKEYIVPGITTEELNNICHNYITYKQHAKPACLGYQGFPKSICTSINDIVCHGIPNKNSILKNGDIINIDVAILKDKYYSDASKMFFVGKPTELGKKLCYVAKKSLYLALYTIRPGINLQKLGKVIQNYVKKQNFSIVKEYCGHGIGRSFHEPPQILHHNYYKSNTTILQSGMTFTVEPMINSGSCEVQCTNDGWTVKTKDKSLSAQYEHTILVNEEGCEILTLQKGEQISRILKNLT.

H80 provides a ligand contact to substrate. D98, D109, and H172 together coordinate a divalent metal cation. H179 lines the substrate pocket. A divalent metal cation-binding residues include E206 and E237.

Belongs to the peptidase M24A family. Methionine aminopeptidase type 1 subfamily. In terms of assembly, monomer. Co(2+) serves as cofactor. The cofactor is Zn(2+). Requires Mn(2+) as cofactor. Fe(2+) is required as a cofactor.

It catalyses the reaction Release of N-terminal amino acids, preferentially methionine, from peptides and arylamides.. In terms of biological role, removes the N-terminal methionine from nascent proteins. The N-terminal methionine is often cleaved when the second residue in the primary sequence is small and uncharged (Met-Ala-, Cys, Gly, Pro, Ser, Thr, or Val). Requires deformylation of the N(alpha)-formylated initiator methionine before it can be hydrolyzed. This chain is Methionine aminopeptidase, found in Buchnera aphidicola subsp. Baizongia pistaciae (strain Bp).